The chain runs to 103 residues: Muscarinic toxin BM14 (103 aa).

The N-terminal stretch at 1 to 21 is a signal peptide; it reads MKTLLLTLVVVTIICLDLGYT. 5 cysteine pairs are disulfide-bonded: C24/C45, C27/C37, C38/C72, C76/C90, and C91/C96.

It belongs to the three-finger toxin family. Ancestral subfamily. Orphan group XVII sub-subfamily. In terms of tissue distribution, expressed by the venom gland.

The protein localises to the secreted. In terms of biological role, this toxin inhibits the binding of [3H]quinuclidinyl benzilate to the M2 muscarinic acetylcholine (mAchR) receptor subtype (CHRM2). This chain is Muscarinic toxin BM14, found in Bungarus multicinctus (Many-banded krait).